The following is a 235-amino-acid chain: Ubiquitin-like-conjugating enzyme ATG10 (235 aa).

Cys-196 acts as the Glycyl thioester intermediate in catalysis.

The protein belongs to the ATG10 family. In terms of assembly, forms homooligomers. Interacts with ATG7 and ATG12.

The protein localises to the preautophagosomal structure membrane. E2-like enzyme required for the cytoplasm to vacuole transport (Cvt), autophagy and nucleophagy. Acts as an E2-like enzyme that catalyzes the conjugation of ATG12 to ATG5. ATG12 conjugation to ATG5 is required for proper localization of ATG8 to the preautophagosomal structure (PAS). Likely serves as an ATG5-recognition molecule. Autophagy is required for proper vegetative growth, asexual/sexual reproduction, and full virulence. Autophagy is particularly involved in the biosynthesis of deoxynivalenol (DON), an important virulence determinant. This chain is Ubiquitin-like-conjugating enzyme ATG10, found in Gibberella zeae (strain ATCC MYA-4620 / CBS 123657 / FGSC 9075 / NRRL 31084 / PH-1) (Wheat head blight fungus).